The primary structure comprises 223 residues: PKHD-type hydroxylase CPS_3426 (223 aa).

Residues 77 to 175 (KSMMPFIISE…RKVALTWIES (99 aa)) enclose the Fe2OG dioxygenase domain. Fe cation contacts are provided by His96, Asp98, and His156. Residue Arg166 coordinates 2-oxoglutarate.

It depends on Fe(2+) as a cofactor. L-ascorbate is required as a cofactor.

The polypeptide is PKHD-type hydroxylase CPS_3426 (Colwellia psychrerythraea (strain 34H / ATCC BAA-681) (Vibrio psychroerythus)).